Reading from the N-terminus, the 977-residue chain is Glutamate receptor 2 (977 aa).

Residues 1 to 19 (MNKNLLVFGFLIFVKIGET) form the signal peptide. Topologically, residues 20–621 (SKKFPLRAFV…FSFMEPLGMT (602 aa)) are extracellular. 6 N-linked (GlcNAc...) asparagine glycosylation sites follow: asparagine 36, asparagine 227, asparagine 291, asparagine 427, asparagine 532, and asparagine 566. The helical transmembrane segment at 622 to 642 (IWIFTLSSYFGVSLTIFLVSW) threads the bilayer. Residues 643–695 (FSPYEKRIEFKRGEFTVTNEFTLYNSLWFTLAAFMQQGTDILPRAVSGRIASS) lie on the Cytoplasmic side of the membrane. The chain crosses the membrane as a helical span at residues 696–716 (CWWFFTLIIVSSYTANLAAFL). The Extracellular portion of the chain corresponds to 717–898 (TLERMTPPIE…GTSSSLNLSK (182 aa)). Residues asparagine 783 and asparagine 895 are each glycosylated (N-linked (GlcNAc...) asparagine). A helical membrane pass occupies residues 899–919 (VAGIFYILLAGMVLSMCTALV). At 920–977 (EFLFRKNKENREKERNRMRSSRPLKPGILASCERAKQKQLQNRRTKSEEVSTPRSTLF) the chain is on the cytoplasmic side. The interval 954–977 (AKQKQLQNRRTKSEEVSTPRSTLF) is disordered.

Belongs to the glutamate-gated ion channel (TC 1.A.10.1) family. Command interneurons of the locomotory control circuit (AIA, AIB, AVA, AVD, AVE, PVC, RIA, RIG and RIR) and motor neurons (AVG, M1, RMDD and RMDV).

The protein localises to the membrane. Its subcellular location is the postsynaptic cell membrane. In terms of biological role, L-glutamate acts as an excitatory neurotransmitter at many synapses in the central nervous system. The postsynaptic actions of glutamate are mediated by a variety of receptors that are named according to their selective agonists. Required for response to mechanical and osmotic stimuli. The polypeptide is Glutamate receptor 2 (glr-2) (Caenorhabditis elegans).